The primary structure comprises 536 residues: Thiamine transport system permease protein ThiP (536 aa).

Helical transmembrane passes span 12-32 (WLIP…AAFL), 58-78 (FSFW…IFLA), 95-115 (LCAM…LSVY), 134-154 (FSPY…LPMA), 199-219 (VAAL…SLGG), 240-260 (PARA…LVLL), 293-313 (VLIV…IVDG), 334-354 (SLRI…MLLW), 374-394 (SGML…FLLL), 404-424 (ADGI…LKVL), 463-483 (AQAL…VALF), and 506-526 (DGAV…TVIE). One can recognise an ABC transmembrane type-1 1 domain in the interval 56–261 (VRFSFWQAFL…VCCLGLVLLS (206 aa)). Positions 331-525 (LWTSLRIALA…LLCFLLFTVI (195 aa)) constitute an ABC transmembrane type-1 2 domain.

Belongs to the binding-protein-dependent transport system permease family. CysTW subfamily. The complex is composed of two ATP-binding proteins (ThiQ), two transmembrane proteins (ThiP) and a solute-binding protein (ThiB).

It is found in the cell inner membrane. With respect to regulation, transport is inhibited by the sulfhydryl-specific modifier N-ethylmaleimide. Its function is as follows. Part of the ABC transporter complex ThiBPQ involved in thiamine import. Probably responsible for the translocation of the substrate across the membrane. This is Thiamine transport system permease protein ThiP (thiP) from Escherichia coli (strain K12).